A 341-amino-acid chain; its full sequence is Putative amino-acid ABC transporter-binding protein YhdW (341 aa).

A signal peptide spans 1 to 19; the sequence is MKKMMIATLAAASVLLAVA.

This sequence belongs to the bacterial solute-binding protein 3 family.

The protein resides in the periplasm. Functionally, probably part of the binding-protein-dependent transport system YdhWXYZ for an amino acid. In Escherichia coli O157:H7, this protein is Putative amino-acid ABC transporter-binding protein YhdW (yhdW).